A 336-amino-acid chain; its full sequence is Gibberellin 2-beta-dioxygenase 7 (336 aa).

The Fe2OG dioxygenase domain maps to 191–291; it reads LENSFLRLNK…RMSIAFFVCP (101 aa). Fe cation-binding residues include histidine 216, aspartate 218, and histidine 272. The active site involves arginine 282. Arginine 282 contacts 2-oxoglutarate.

It belongs to the iron/ascorbate-dependent oxidoreductase family. GA2OX subfamily. Requires Fe(2+) as cofactor.

It carries out the reaction gibberellin A1 + 2-oxoglutarate + O2 = gibberellin A8 + succinate + CO2. Its pathway is plant hormone biosynthesis; gibberellin biosynthesis. In terms of biological role, catalyzes the 2-beta-hydroxylation of gibberellins (GA) precursors, rendering them unable to be converted to active GAs. Hydroxylates the C20-GA GA12 and GA53, but is not active on C19-GAs, like GA1, GA4, GA9 and GA20. The polypeptide is Gibberellin 2-beta-dioxygenase 7 (GA2OX7) (Arabidopsis thaliana (Mouse-ear cress)).